Reading from the N-terminus, the 291-residue chain is ATP synthase subunit a (291 aa).

A run of 7 helical transmembrane segments spans residues L50 to V70, I108 to I128, P129 to P149, D161 to I181, P203 to A223, L241 to W261, and A262 to V282.

The protein belongs to the ATPase A chain family. In terms of assembly, F-type ATPases have 2 components, CF(1) - the catalytic core - and CF(0) - the membrane proton channel. CF(1) has five subunits: alpha(3), beta(3), gamma(1), delta(1), epsilon(1). CF(0) has three main subunits: a(1), b(2) and c(9-12). The alpha and beta chains form an alternating ring which encloses part of the gamma chain. CF(1) is attached to CF(0) by a central stalk formed by the gamma and epsilon chains, while a peripheral stalk is formed by the delta and b chains.

The protein localises to the cell inner membrane. Functionally, key component of the proton channel; it plays a direct role in the translocation of protons across the membrane. The polypeptide is ATP synthase subunit a (Acinetobacter baumannii (strain AB307-0294)).